The following is a 1482-amino-acid chain: Cystic fibrosis transmembrane conductance regulator (1482 aa).

The Cytoplasmic segment spans residues 1–77; that stretch reads MQRSPLEKAS…KLINALRRCF (77 aa). The helical transmembrane segment at 78 to 98 threads the bilayer; that stretch reads FWRFTFYGIILYLGEVTKAVQ. Residues 81–365 enclose the ABC transmembrane type-1 1 domain; that stretch reads FTFYGIILYL…WAVQTWYDSL (285 aa). The Extracellular portion of the chain corresponds to 99–122; sequence PLLLGRIIASYDPDNKVERSIAIY. Residues 123-146 form a helical membrane-spanning segment; that stretch reads LAVGLCLLFVVRTLLLHPAIFGLH. Residues 147–195 are Cytoplasmic-facing; that stretch reads HIGMQMRIAMFSLIYKKTLKLSSRVLDKISIGQLVSLLSNNLNKFDEGL. Residues 196 to 216 form a helical membrane-spanning segment; sequence ALAHFVWIAPLQVTLLMGLLW. Over 217–222 the chain is Extracellular; that stretch reads DLLQAS. The helical transmembrane segment at 223–243 threads the bilayer; the sequence is AFSGLGVLIILACFQAGFGRM. The Cytoplasmic segment spans residues 244–298; it reads MMKYRDQRAGKINERLVITSEMIENIQSVKAYCWEEALEKMIENFRQSELRLTRK. Residues 299–319 form a helical membrane-spanning segment; it reads AAYVRYFNSSAFFFSGFFVVF. Topologically, residues 320–339 are extracellular; that stretch reads LSVLPYALIKGIILRKIFTT. A helical transmembrane segment spans residues 340-358; it reads ISFCIVLRMAVTRQFPWAV. Over 359–859 the chain is Cytoplasmic; it reads QTWYDSLGAI…YLRYITVHKR (501 aa). Residues Trp-401, Ser-434, 458 to 465, and Gln-493 contribute to the ATP site; that span reads GSTGAGKT. One can recognise an ABC transporter 1 domain in the interval 423–646; the sequence is NVDNSLFFSN…RPDFSSKLMG (224 aa). Cys-524 carries S-palmitoyl cysteine lipidation. Residues Ser-549 and Ser-660 each carry the phosphoserine modification. The interval 654–832 is disordered R region; that stretch reads SAERRNSIIT…EEINEEDLKE (179 aa). Phosphoserine; by PKA is present on Ser-670. Residue Ser-686 is modified to Phosphoserine. Lys-688 is covalently cross-linked (Glycyl lysine isopeptide (Lys-Gly) (interchain with G-Cter in ubiquitin)). Phosphoserine occurs at positions 700 and 712. Residue Thr-717 is modified to Phosphothreonine. A phosphoserine mark is found at Ser-737, Ser-768, Ser-796, and Ser-814. The helical transmembrane segment at 860-880 threads the bilayer; the sequence is LIFVLIWCFVVFLIEVAASLV. The ABC transmembrane type-1 2 domain occupies 860–1156; the sequence is LIFVLIWCFV…AVNSSIDVDS (297 aa). Residues 881–919 lie on the Extracellular side of the membrane; that stretch reads LLCLLSKVSPEDKGNTTKSANDSSAVIITSTSSFYFLYI. 2 N-linked (GlcNAc...) asparagine glycosylation sites follow: Asn-895 and Asn-901. A discontinuously helical membrane pass occupies residues 920–940; sequence YVGVADTFLALGLFRGLPLVH. Topologically, residues 941–991 are cytoplasmic; it reads TLITVSKILHHKMLHSVLQAPMSTLNTLKAGGILNRFSKDIAILDDLLPLT. Residues 992–1012 traverse the membrane as a helical segment; it reads IFDFIQLLLIVIGAVAVVSIL. Over 1013-1014 the chain is Extracellular; that stretch reads KP. The chain crosses the membrane as a helical span at residues 1015–1035; sequence YIFLATVPVIVAFVLLRAYFL. Over 1036-1096 the chain is Cytoplasmic; it reads HTSQQLKQLE…TANWFLYLST (61 aa). A helical membrane pass occupies residues 1097–1117; sequence LRWFQMRIEMIFVIFFIAVTF. Residues 1118 to 1131 are Extracellular-facing; the sequence is ISILTTGEGEGTVG. A helical membrane pass occupies residues 1132–1152; that stretch reads IILTLAMNIMSTLQWAVNSSI. The Cytoplasmic portion of the chain corresponds to 1153 to 1482; that stretch reads DVDSLMRSVS…TEEEVQDTRL (330 aa). In terms of domain architecture, ABC transporter 2 spans 1212-1445; that stretch reads MTVKDLTAKY…KSLFRQAISP (234 aa). ATP is bound by residues Tyr-1221 and 1246 to 1253; that span reads GRTGSGKS. The segment at 1388–1482 is interaction with GORASP2; the sequence is RTLKQAFADC…TEEEVQDTRL (95 aa). Residue Cys-1397 is the site of S-palmitoyl cysteine attachment. Ser-1446 is modified (phosphoserine). The tract at residues 1450-1482 is disordered; sequence KLFPHQNSGKHKSRSKITALKEETEEEVQDTRL. Residues 1472-1482 show a composition bias toward acidic residues; sequence ETEEEVQDTRL. Residues 1480-1482 carry the PDZ-binding motif; the sequence is TRL.

This sequence belongs to the ABC transporter superfamily. ABCC family. CFTR transporter (TC 3.A.1.202) subfamily. Monomer; does not require oligomerization for channel activity. May form oligomers in the membrane. Interacts with SLC26A3, SLC26A6 and NHERF1. Interacts with SHANK2. Interacts with MYO6. Interacts (via C-terminus) with GOPC (via PDZ domain); this promotes CFTR internalization and thereby decreases channel activity. Interacts with SLC4A7 through NHERF1. Found in a complex with MYO5B and RAB11A. Interacts with ANO1. Interacts with SLC26A8. Interacts with AHCYL1; the interaction increases CFTR activity. Interacts with CSE1L. The core-glycosylated form interacts with GORASP2 (via PDZ GRASP-type 1 domain) in respone to ER stress. Interacts with MARCHF2; the interaction leads to CFTR ubiqtuitination and degradation. Interacts with ADGRG2. In terms of processing, N-glycosylated. Post-translationally, phosphorylated; cAMP treatment promotes phosphorylation and activates the channel. Dephosphorylation decreases the ATPase activity (in vitro). Phosphorylation at PKA sites activates the channel. Phosphorylation at PKC sites enhances the response to phosphorylation by PKA. Phosphorylated by AMPK; this inhibits channel activity. Ubiquitinated, leading to its degradation in the lysosome. Deubiquitination by USP10 in early endosomes enhances its endocytic recycling to the cell membrane. Ubiquitinated by RNF185 during ER stress. Ubiquitinated by MARCHF2.

It is found in the apical cell membrane. The protein resides in the early endosome membrane. It localises to the cell membrane. The protein localises to the recycling endosome membrane. Its subcellular location is the endoplasmic reticulum membrane. It is found in the nucleus. It catalyses the reaction ATP + H2O + closed Cl(-) channel = ADP + phosphate + open Cl(-) channel.. The catalysed reaction is chloride(in) = chloride(out). It carries out the reaction hydrogencarbonate(in) = hydrogencarbonate(out). The enzyme catalyses ATP + H2O = ADP + phosphate + H(+). Functionally, epithelial ion channel that plays an important role in the regulation of epithelial ion and water transport and fluid homeostasis. Mediates the transport of chloride ions across the cell membrane. Possesses an intrinsic ATPase activity and utilizes ATP to gate its channel; the passive flow of anions through the channel is gated by cycles of ATP binding and hydrolysis by the ATP-binding domains. The ion channel is also permeable to HCO(3)(-); selectivity depends on the extracellular chloride concentration. Exerts its function also by modulating the activity of other ion channels and transporters. Contributes to the regulation of the pH and the ion content of the epithelial fluid layer. Modulates the activity of the epithelial sodium channel (ENaC) complex, in part by regulating the cell surface expression of the ENaC complex. May regulate bicarbonate secretion and salvage in epithelial cells by regulating the transporter SLC4A7. Can inhibit the chloride channel activity of ANO1. Plays a role in the chloride and bicarbonate homeostasis during sperm epididymal maturation and capacitation. The polypeptide is Cystic fibrosis transmembrane conductance regulator (Dasypus novemcinctus (Nine-banded armadillo)).